Here is a 1201-residue protein sequence, read N- to C-terminus: MKMLTKFESKSTRAKGIAFHPSRPWVLVALFSSTIQLWDYRMGTLLHRFEDHEGPVRGLDFHPTQPIFVSAGDDYTIKVWSLDTNKCLYTLTGHLDYVRTVFFHRELPWIISASDDQTIRIWNWQNRKEIACLTGHNHFVMCAQFHPTDDLIVSASLDETIRIWDISGLRKRHSAPGTSSFEEQMSAQQNLLDGSLGDCVVKFILEGHTRGVNWASFHPTLPLIVSGSDDRQVKLWRMSATKAWEVDTCRGHTNNVDSVIFHPHQNLIISVGEDKTLRVWDLDKRTPVKQFKRENDRFWLIAAHPHINLFGAAHDSGIMVFKLDRERPCSFIHQNQLFFVNAEKQIQSFNFQKRVASLPYASLKGIGQPWDAFRSISYNPSQHSVLVNEANGKFALVILPKQPVGAVEPTSVTQDTGNFATFVGRNRFVVYNKNTESVEVRSLENKVTRNIKVEETVRTIVAAGPGSVLVIHPREVILYDVQQGKKVSQLAVKNVKYVSWSLDGQYVALMSKHTITLATKKLELINSMHETIRIKSAAWDETGVLIYSTLNHIRYSLLNGDRGIIKTLEKTLYITKVQGKLVYCLNREGEIEILTIDPTEYRFKKALVNKNFPEVLRLIKDSNLVGQNIISYLQKSGYPEIALQFVQDPHIRFDLALEYGNLDVALDEAKKLNDSSTWERLIQEALAQGNASLAEMIYQTQHSFDKLSFLYLVTGDVNKLSKMQNIAQTREDFGSMLLNTFYNNSTKERSSIFAEGGSLPLAYAVAKANGDEAAASAFLEQAEVDEQDVTLPDQMDASNFVQRPVISKPLEKWPLKEAELSYFEKAVLGQIDDLTIDDETPAVNTTQEQEEPLGEENFNDEDIGEDEGAWDLGDEDLDVGEELPEEVEQGEITSPAQEVETAIWIKNSKLPAVLVAAGAFDAAVQALSKQVGVVKLEPLKKYFTNIYEGCRTYIPSTPCELPAQLGYVRAYDDTVSEDQILPYVPGLDVVNEKMNEGYKNFKLNKPDIAIECFREAIYRITLLMVDDAEDEKLAHKILETAREYILGLSIELERRSLKEGNTVRMLELAAYFTKAKLSPIHRTNALQVAMSQHFKHKNFLQASYFAGEFLKIISSGPRAEQARKIKNKADSMASDAIPIDFDPYAKFDICAATYKPIYEDTPSVSDPLTGSKYVITEKDKIDRIAMISKIGAPASGLRIRV.

WD repeat units lie at residues 9 to 39, 51 to 81, 93 to 123, 135 to 165, 207 to 237, and 251 to 281; these read SKST…QLWD, DHEG…KVWS, GHLD…RIWN, GHNH…RIWD, GHTR…KLWR, and GHTN…RVWD. The disordered stretch occupies residues 842–862; the sequence is AVNTTQEQEEPLGEENFNDED. Acidic residues predominate over residues 848 to 862; that stretch reads EQEEPLGEENFNDED.

Oligomeric complex that consists of at least the alpha, beta, beta', gamma, delta, epsilon and zeta subunits. Interacts with the ESCRT-0 subunit VPS27. Interacts with KEI1 (via C-terminal region).

The protein resides in the cytoplasm. Its subcellular location is the golgi apparatus membrane. The protein localises to the cytoplasmic vesicle. It localises to the COPI-coated vesicle membrane. The coatomer is a cytosolic protein complex that binds to dilysine motifs and reversibly associates with Golgi non-clathrin-coated vesicles, which further mediate biosynthetic protein transport from the ER, via the Golgi up to the trans Golgi network. Coatomer complex is required for budding from Golgi membranes, and is essential for the retrograde Golgi-to-ER transport of dilysine-tagged proteins. This is Coatomer subunit alpha (COP1) from Saccharomyces cerevisiae (strain ATCC 204508 / S288c) (Baker's yeast).